A 398-amino-acid chain; its full sequence is MTKEKVVLAYSGGLDTSIIIPWLKENYDLDVIAVCIDVGQDDDMEEVKKKAIKTGAVKVYVEDAKEEFVKDYVFKALKANALYEEKYMLGTSLARPLMAKKLVEIAHKEGAKYICHGCTGKGNDQVRFEVGIASFDPSIKIIAPWRIWDIKSREDAIDYAKEKGVEVPVTKKKIYSVDKNILHTSHEGGELEDPKNAHNKEMYSMVTPPEKAKDEPTYVDIYFNKGVPEKINGKEISPVELLNTLNKIGGENGVGVVDIVENRLVGMKSRGVYETPGGTILYEAHKDLESLTLDKLTLHCKQELAQKYGEIAYDGLWFTTLRESLDAFVDVTQENVTGTVKLKLYKGNIMNAGIDTKNALYDEGISSFGASELYSHKDAEGFIKLFSLPSKIKALKNK.

9 to 17 (AYSGGLDTS) provides a ligand contact to ATP. Residues Tyr87 and Ser92 each coordinate L-citrulline. Gly117 is a binding site for ATP. Residues Thr119, Asn123, and Asp124 each coordinate L-aspartate. Asn123 is a binding site for L-citrulline. The L-citrulline site is built by Arg127, Ser176, Ser185, Glu261, and Tyr273.

The protein belongs to the argininosuccinate synthase family. Type 1 subfamily. In terms of assembly, homotetramer.

The protein resides in the cytoplasm. The enzyme catalyses L-citrulline + L-aspartate + ATP = 2-(N(omega)-L-arginino)succinate + AMP + diphosphate + H(+). It functions in the pathway amino-acid biosynthesis; L-arginine biosynthesis; L-arginine from L-ornithine and carbamoyl phosphate: step 2/3. The sequence is that of Argininosuccinate synthase from Clostridium tetani (strain Massachusetts / E88).